A 509-amino-acid polypeptide reads, in one-letter code: Maturase K (509 aa).

The protein belongs to the intron maturase 2 family. MatK subfamily.

It localises to the plastid. It is found in the chloroplast. Functionally, usually encoded in the trnK tRNA gene intron. Probably assists in splicing its own and other chloroplast group II introns. The chain is Maturase K from Clematis ligusticifolia (Western white clematis).